Consider the following 189-residue polypeptide: Putative dihydrofolate reductase (189 aa).

One can recognise a DHFR domain in the interval 3-185; sequence KMNLIVAMDA…LKFEFCKWKV (183 aa). Residues alanine 9 and 15–21 each bind NADP(+); that span reads GIGKNGV. A substrate-binding site is contributed by 29–34; the sequence is DMQYFA. 53–55 serves as a coordination point for NADP(+); sequence RKC. Arginine 69 contributes to the substrate binding site. NADP(+)-binding positions include 75 to 77 and 115 to 122; these read SRQ and GGAEIYDL.

Belongs to the dihydrofolate reductase family.

It carries out the reaction (6S)-5,6,7,8-tetrahydrofolate + NADP(+) = 7,8-dihydrofolate + NADPH + H(+). It participates in cofactor biosynthesis; tetrahydrofolate biosynthesis; 5,6,7,8-tetrahydrofolate from 7,8-dihydrofolate: step 1/1. In terms of biological role, key enzyme in folate metabolism. Catalyzes an essential reaction for de novo glycine and purine synthesis, and for DNA precursor synthesis. The chain is Putative dihydrofolate reductase (dhfr-1) from Caenorhabditis elegans.